The primary structure comprises 243 residues: 4-hydroxy-tetrahydrodipicolinate reductase (243 aa).

NAD(+) is bound by residues 9 to 14 (GANGKM), 78 to 80 (GTS), and 104 to 107 (APNF). His134 acts as the Proton donor/acceptor in catalysis. (S)-2,3,4,5-tetrahydrodipicolinate is bound at residue His135. The active-site Proton donor is the Lys138. Residue 144–145 (GT) participates in (S)-2,3,4,5-tetrahydrodipicolinate binding.

The protein belongs to the DapB family.

The protein resides in the cytoplasm. It carries out the reaction (S)-2,3,4,5-tetrahydrodipicolinate + NAD(+) + H2O = (2S,4S)-4-hydroxy-2,3,4,5-tetrahydrodipicolinate + NADH + H(+). The enzyme catalyses (S)-2,3,4,5-tetrahydrodipicolinate + NADP(+) + H2O = (2S,4S)-4-hydroxy-2,3,4,5-tetrahydrodipicolinate + NADPH + H(+). Its pathway is amino-acid biosynthesis; L-lysine biosynthesis via DAP pathway; (S)-tetrahydrodipicolinate from L-aspartate: step 4/4. In terms of biological role, catalyzes the conversion of 4-hydroxy-tetrahydrodipicolinate (HTPA) to tetrahydrodipicolinate. The sequence is that of 4-hydroxy-tetrahydrodipicolinate reductase from Legionella pneumophila (strain Paris).